We begin with the raw amino-acid sequence, 601 residues long: Terpenoid synthase 17 (601 aa).

Mg(2+) contacts are provided by Asn-354, Asp-358, Asn-497, Thr-501, and Glu-505. Positions 354-358 (NDTCD) match the DDXXD motif; degenerate motif.

The protein belongs to the terpene synthase family. Tpsa subfamily. It depends on Mg(2+) as a cofactor. Mn(2+) is required as a cofactor. As to expression, expressed exclusively in flowers.

The protein localises to the cytoplasm. Its pathway is secondary metabolite biosynthesis; terpenoid biosynthesis. This is Terpenoid synthase 17 (TPS17) from Arabidopsis thaliana (Mouse-ear cress).